The sequence spans 313 residues: Olfactory receptor 56A4 (313 aa).

Residues 1–28 are Extracellular-facing; it reads MASPSNDSTAPVSEFLLICFPNFQSWQH. N6 is a glycosylation site (N-linked (GlcNAc...) asparagine). The chain crosses the membrane as a helical span at residues 29 to 49; that stretch reads WLSLPLSLLFLLAMGANTTLL. Residues 50 to 57 lie on the Cytoplasmic side of the membrane; sequence ITIQLEAS. Residues 58–78 traverse the membrane as a helical segment; that stretch reads LHQPLYYLLSLLSLLDIVLCL. At 79-102 the chain is on the extracellular side; that stretch reads TVIPKVLAIFWFDLRSISFPACFL. C100 and C192 are joined by a disulfide. Residues 103–123 traverse the membrane as a helical segment; the sequence is QMFIMNSFLTMESCTFMVMAY. The Cytoplasmic portion of the chain corresponds to 124–142; sequence DRYVAICHPLRYPSIITDQ. A helical membrane pass occupies residues 143–163; sequence FVARAVVFVIARNAFVSLPVP. Topologically, residues 164–199 are extracellular; sequence MLSARLRYCAGNIIKNCICSNLSVSKLSCDDITFNQ. An N-linked (GlcNAc...) asparagine glycan is attached at N184. A helical transmembrane segment spans residues 200-220; sequence LYQFVAGWTLLGSDLILIVIS. Topologically, residues 221-240 are cytoplasmic; the sequence is YSFILKVVLRIKAEGAVAKA. The helical transmembrane segment at 241–261 threads the bilayer; that stretch reads LSTCGSHFILILFFSTVLLVL. Topologically, residues 262–276 are extracellular; that stretch reads VITNLARKRIPPDVP. Residues 277–297 traverse the membrane as a helical segment; that stretch reads ILLNILHHLIPPALNPIVYGV. Residues 298 to 313 are Cytoplasmic-facing; that stretch reads RTKEIKQGIQNLLKRL.

It belongs to the G-protein coupled receptor 1 family.

It is found in the cell membrane. In terms of biological role, odorant receptor. This is Olfactory receptor 56A4 (OR56A4) from Homo sapiens (Human).